The chain runs to 258 residues: Imidazole glycerol phosphate synthase subunit HisF (258 aa).

Catalysis depends on residues D11 and D130.

The protein belongs to the HisA/HisF family. As to quaternary structure, heterodimer of HisH and HisF.

Its subcellular location is the cytoplasm. It catalyses the reaction 5-[(5-phospho-1-deoxy-D-ribulos-1-ylimino)methylamino]-1-(5-phospho-beta-D-ribosyl)imidazole-4-carboxamide + L-glutamine = D-erythro-1-(imidazol-4-yl)glycerol 3-phosphate + 5-amino-1-(5-phospho-beta-D-ribosyl)imidazole-4-carboxamide + L-glutamate + H(+). Its pathway is amino-acid biosynthesis; L-histidine biosynthesis; L-histidine from 5-phospho-alpha-D-ribose 1-diphosphate: step 5/9. Functionally, IGPS catalyzes the conversion of PRFAR and glutamine to IGP, AICAR and glutamate. The HisF subunit catalyzes the cyclization activity that produces IGP and AICAR from PRFAR using the ammonia provided by the HisH subunit. The sequence is that of Imidazole glycerol phosphate synthase subunit HisF from Escherichia coli O7:K1 (strain IAI39 / ExPEC).